The primary structure comprises 98 residues: Envelope glycoprotein N (98 aa).

An N-terminal signal peptide occupies residues 1–24 (MVSSAGLSLTLVAALCALVAPALS). The Virion surface portion of the chain corresponds to 25–60 (SIVSTEGPLPLLREESRINFWNAACAARGVPVDQPT). Residues 61–81 (AAAVTFYICLLAVLVVALGYA) traverse the membrane as a helical segment. Over 82 to 98 (TRTCTRMLHASPAGRRV) the chain is Intravirion.

Belongs to the herpesviridae glycoprotein N family. As to quaternary structure, interacts (via N-terminus) with gM (via N-terminus). The gM-gN heterodimer forms the gCII complex. O-glycosylated.

It localises to the virion membrane. The protein localises to the host membrane. The protein resides in the host Golgi apparatus. It is found in the host trans-Golgi network. In terms of biological role, envelope glycoprotein necessary for proper maturation of gM and modulation of its membrane fusion activity. Also plays a critical role in virion morphogenesis. The sequence is that of Envelope glycoprotein N from Suid herpesvirus 1 (SuHV-1).